The sequence spans 264 residues: Thymidylate synthase (264 aa).

Residue Arg21 coordinates dUMP. His51 provides a ligand contact to (6R)-5,10-methylene-5,6,7,8-tetrahydrofolate. 126-127 (RR) serves as a coordination point for dUMP. Cys146 acts as the Nucleophile in catalysis. DUMP-binding positions include 166–169 (RSAD), Asn177, and 207–209 (HLY). Residue Asp169 participates in (6R)-5,10-methylene-5,6,7,8-tetrahydrofolate binding. Position 263 (Ala263) interacts with (6R)-5,10-methylene-5,6,7,8-tetrahydrofolate.

Belongs to the thymidylate synthase family. Bacterial-type ThyA subfamily. In terms of assembly, homodimer.

Its subcellular location is the cytoplasm. It carries out the reaction dUMP + (6R)-5,10-methylene-5,6,7,8-tetrahydrofolate = 7,8-dihydrofolate + dTMP. It functions in the pathway pyrimidine metabolism; dTTP biosynthesis. Catalyzes the reductive methylation of 2'-deoxyuridine-5'-monophosphate (dUMP) to 2'-deoxythymidine-5'-monophosphate (dTMP) while utilizing 5,10-methylenetetrahydrofolate (mTHF) as the methyl donor and reductant in the reaction, yielding dihydrofolate (DHF) as a by-product. This enzymatic reaction provides an intracellular de novo source of dTMP, an essential precursor for DNA biosynthesis. This chain is Thymidylate synthase, found in Aromatoleum aromaticum (strain DSM 19018 / LMG 30748 / EbN1) (Azoarcus sp. (strain EbN1)).